Here is a 218-residue protein sequence, read N- to C-terminus: 7-cyano-7-deazaguanine synthase 1 (218 aa).

9-19 (YSGGMDSFTVL) contributes to the ATP binding site. 4 residues coordinate Zn(2+): C185, C193, C196, and C199.

The protein belongs to the QueC family. It depends on Zn(2+) as a cofactor.

The enzyme catalyses 7-carboxy-7-deazaguanine + NH4(+) + ATP = 7-cyano-7-deazaguanine + ADP + phosphate + H2O + H(+). It participates in purine metabolism; 7-cyano-7-deazaguanine biosynthesis. In terms of biological role, catalyzes the ATP-dependent conversion of 7-carboxy-7-deazaguanine (CDG) to 7-cyano-7-deazaguanine (preQ(0)). This Colwellia psychrerythraea (strain 34H / ATCC BAA-681) (Vibrio psychroerythus) protein is 7-cyano-7-deazaguanine synthase 1.